We begin with the raw amino-acid sequence, 213 residues long: ATP-dependent Clp protease proteolytic subunit 1 (213 aa).

The active-site Nucleophile is Ser-114. His-139 is a catalytic residue.

This sequence belongs to the peptidase S14 family. As to quaternary structure, fourteen ClpP subunits assemble into 2 heptameric rings which stack back to back to give a disk-like structure with a central cavity, resembling the structure of eukaryotic proteasomes.

It localises to the cytoplasm. It carries out the reaction Hydrolysis of proteins to small peptides in the presence of ATP and magnesium. alpha-casein is the usual test substrate. In the absence of ATP, only oligopeptides shorter than five residues are hydrolyzed (such as succinyl-Leu-Tyr-|-NHMec, and Leu-Tyr-Leu-|-Tyr-Trp, in which cleavage of the -Tyr-|-Leu- and -Tyr-|-Trp bonds also occurs).. Its function is as follows. Cleaves peptides in various proteins in a process that requires ATP hydrolysis. Has a chymotrypsin-like activity. Plays a major role in the degradation of misfolded proteins. This is ATP-dependent Clp protease proteolytic subunit 1 from Pseudomonas aeruginosa (strain ATCC 15692 / DSM 22644 / CIP 104116 / JCM 14847 / LMG 12228 / 1C / PRS 101 / PAO1).